The sequence spans 102 residues: RNA-binding protein Hfq (102 aa).

Residues 9–68 (DPFLNALRRERVPVSIYLVNGIKLQGQIESFDQFVILLKNTVSQMVYKHAISTVVPSRPV) enclose the Sm domain. The interval 63-102 (VPSRPVSHHSNNAGGGTSSNYHHGSSPQNTSAQQDSEETE) is disordered. Residues 70 to 96 (HHSNNAGGGTSSNYHHGSSPQNTSAQQ) show a composition bias toward polar residues.

Belongs to the Hfq family. As to quaternary structure, homohexamer.

Its function is as follows. RNA chaperone that binds small regulatory RNA (sRNAs) and mRNAs to facilitate mRNA translational regulation in response to envelope stress, environmental stress and changes in metabolite concentrations. Also binds with high specificity to tRNAs. This is RNA-binding protein Hfq from Shigella dysenteriae serotype 1 (strain Sd197).